Consider the following 203-residue polypeptide: Small ribosomal subunit protein uS4 (203 aa).

In terms of domain architecture, S4 RNA-binding spans 93–153 (RRFDNVVFRA…QKSQNLDAVA (61 aa)).

The protein belongs to the universal ribosomal protein uS4 family. Part of the 30S ribosomal subunit. Contacts protein S5. The interaction surface between S4 and S5 is involved in control of translational fidelity.

One of the primary rRNA binding proteins, it binds directly to 16S rRNA where it nucleates assembly of the body of the 30S subunit. In terms of biological role, with S5 and S12 plays an important role in translational accuracy. The sequence is that of Small ribosomal subunit protein uS4 from Chlorobium phaeobacteroides (strain BS1).